The following is an 83-amino-acid chain: Short neurotoxin VAN-10 (83 aa).

Residues 1-21 form the signal peptide; the sequence is MKTLLLTLVVVTIVCLDLGYT. Cystine bridges form between Cys-24-Cys-45, Cys-38-Cys-62, Cys-64-Cys-75, and Cys-76-Cys-81.

It belongs to the three-finger toxin family. Short-chain subfamily. Type I alpha-neurotoxin sub-subfamily. In terms of tissue distribution, expressed by the venom gland.

Its subcellular location is the secreted. In terms of biological role, binds to muscle nicotinic acetylcholine receptor (nAChR) and inhibit acetylcholine from binding to the receptor, thereby impairing neuromuscular transmission. This is Short neurotoxin VAN-10 from Laticauda laticaudata (Blue-ringed sea krait).